The following is a 114-amino-acid chain: T cell receptor beta variable 9 (114 aa).

A signal peptide spans 1–21 (MGFRLLCCVAFCLLGAGPVDS). The region spanning 22 to 114 (GVTQTPKHLI…SALYFCASSV (93 aa)) is the Ig-like domain. Cys42 and Cys110 are oxidised to a cystine. N-linked (GlcNAc...) asparagine glycosylation is present at Asn96.

In terms of assembly, alpha-beta TR is a heterodimer composed of an alpha and beta chain; disulfide-linked. The alpha-beta TR is associated with the transmembrane signaling CD3 coreceptor proteins to form the TR-CD3 (TcR or TCR). The assembly of alpha-beta TR heterodimers with CD3 occurs in the endoplasmic reticulum where a single alpha-beta TR heterodimer associates with one CD3D-CD3E heterodimer, one CD3G-CD3E heterodimer and one CD247 homodimer forming a stable octameric structure. CD3D-CD3E and CD3G-CD3E heterodimers preferentially associate with TR alpha and TR beta chains, respectively. The association of the CD247 homodimer is the last step of TcR assembly in the endoplasmic reticulum and is required for transport to the cell surface.

Its subcellular location is the cell membrane. Functionally, v region of the variable domain of T cell receptor (TR) beta chain that participates in the antigen recognition. Alpha-beta T cell receptors are antigen specific receptors which are essential to the immune response and are present on the cell surface of T lymphocytes. Recognize peptide-major histocompatibility (MH) (pMH) complexes that are displayed by antigen presenting cells (APC), a prerequisite for efficient T cell adaptive immunity against pathogens. Binding of alpha-beta TR to pMH complex initiates TR-CD3 clustering on the cell surface and intracellular activation of LCK that phosphorylates the ITAM motifs of CD3G, CD3D, CD3E and CD247 enabling the recruitment of ZAP70. In turn ZAP70 phosphorylates LAT, which recruits numerous signaling molecules to form the LAT signalosome. The LAT signalosome propagates signal branching to three major signaling pathways, the calcium, the mitogen-activated protein kinase (MAPK) kinase and the nuclear factor NF-kappa-B (NF-kB) pathways, leading to the mobilization of transcription factors that are critical for gene expression and essential for T cell growth and differentiation. The T cell repertoire is generated in the thymus, by V-(D)-J rearrangement. This repertoire is then shaped by intrathymic selection events to generate a peripheral T cell pool of self-MH restricted, non-autoaggressive T cells. Post-thymic interaction of alpha-beta TR with the pMH complexes shapes TR structural and functional avidity. This is T cell receptor beta variable 9 from Homo sapiens (Human).